The primary structure comprises 468 residues: Shaggy-related protein kinase theta (468 aa).

Disordered regions lie at residues 1–53 (MNVM…DQST) and 91–112 (HANR…CGTE). Residues 134-418 (YMAQRVVGTG…ALEACAHPFF (285 aa)) form the Protein kinase domain. Residues 140 to 148 (VGTGSFGVV) and Lys-163 contribute to the ATP site. Asp-259 functions as the Proton acceptor in the catalytic mechanism. Phosphotyrosine is present on Tyr-294.

This sequence belongs to the protein kinase superfamily. CMGC Ser/Thr protein kinase family. GSK-3 subfamily. In terms of processing, autophosphorylated mainly on threonine and serine residues. In developing pollen.

The catalysed reaction is L-seryl-[protein] + ATP = O-phospho-L-seryl-[protein] + ADP + H(+). It catalyses the reaction L-threonyl-[protein] + ATP = O-phospho-L-threonyl-[protein] + ADP + H(+). Its function is as follows. May mediate extracellular signals to regulate transcription in differentiating cells. This chain is Shaggy-related protein kinase theta, found in Brassica napus (Rape).